Consider the following 428-residue polypeptide: GTPase Obg (428 aa).

The Obg domain maps to 1–158 (MFVDQVKIYV…RYIVLELKVL (158 aa)). The disordered stretch occupies residues 118-143 (KGGRGGRGNTRFATPANPAPQLSENG). The OBG-type G domain maps to 159 to 329 (ADVGLVGFPS…LLFEIADRLE (171 aa)). GTP-binding positions include 165–172 (GFPSVGKS), 190–194 (FTTLN), 212–215 (DLPG), 282–285 (NKMD), and 310–312 (SAV). Residues serine 172 and threonine 192 each contribute to the Mg(2+) site. One can recognise an OCT domain in the interval 350-428 (KLEDEEAPFE…LLEFEFEFID (79 aa)).

It belongs to the TRAFAC class OBG-HflX-like GTPase superfamily. OBG GTPase family. Monomer. The cofactor is Mg(2+).

It is found in the cytoplasm. Its function is as follows. An essential GTPase which binds GTP, GDP and possibly (p)ppGpp with moderate affinity, with high nucleotide exchange rates and a fairly low GTP hydrolysis rate. Plays a role in control of the cell cycle, stress response, ribosome biogenesis and in those bacteria that undergo differentiation, in morphogenesis control. The protein is GTPase Obg of Bacillus licheniformis (strain ATCC 14580 / DSM 13 / JCM 2505 / CCUG 7422 / NBRC 12200 / NCIMB 9375 / NCTC 10341 / NRRL NRS-1264 / Gibson 46).